A 142-amino-acid chain; its full sequence is Immunity protein WapI (142 aa).

Its function is as follows. Immunity protein component of a toxin-immunity protein module, which functions as a cellular contact-dependent growth inhibition (CDI) system. Neutralizes the tRNase activity of cognate toxin WapA upon expression in E.coli. Does not inhibit WapA from other strains of B.subtilis. The WapA C-terminus cannot be expressed on its own in E.coli, however it can be cloned in the presence of its cognate immunity protein gene. Cell contact is necessary for growth inhibition. Unlike the LXG toxin-immunity modules, WapAI mediates competition under shaking culture conditions. The chain is Immunity protein WapI (wapI) from Bacillus subtilis (strain 168).